The sequence spans 371 residues: Chaperone protein DnaJ (371 aa).

A J domain is found at 5-69; the sequence is EFYDRLGVSK…QKRAAYDQYG (65 aa). The CR-type zinc finger occupies 127 to 209; sequence GAEKEVSYNR…CHGTGHEKKT (83 aa). Zn(2+) is bound by residues C140, C143, C157, C160, C183, C186, C197, and C200. 4 CXXCXGXG motif repeats span residues 140–147, 157–164, 183–190, and 197–204; these read CHTCSGSG, CQKCHGSG, CDVCQGSG, and CPTCHGTG.

This sequence belongs to the DnaJ family. As to quaternary structure, homodimer. The cofactor is Zn(2+).

It localises to the cytoplasm. Functionally, participates actively in the response to hyperosmotic and heat shock by preventing the aggregation of stress-denatured proteins and by disaggregating proteins, also in an autonomous, DnaK-independent fashion. Unfolded proteins bind initially to DnaJ; upon interaction with the DnaJ-bound protein, DnaK hydrolyzes its bound ATP, resulting in the formation of a stable complex. GrpE releases ADP from DnaK; ATP binding to DnaK triggers the release of the substrate protein, thus completing the reaction cycle. Several rounds of ATP-dependent interactions between DnaJ, DnaK and GrpE are required for fully efficient folding. Also involved, together with DnaK and GrpE, in the DNA replication of plasmids through activation of initiation proteins. This chain is Chaperone protein DnaJ, found in Streptococcus agalactiae serotype Ia (strain ATCC 27591 / A909 / CDC SS700).